Reading from the N-terminus, the 170-residue chain is MNDYTLAIRRERRLLMLLGWVCIALLAGALYLQYVKNEDPCPLCIIQRYFFCAIGIFAFLAAGIRNWRGVWVLELLIAIAAAGGVGTAARHLTIQMNPGFSCGFDTLQPIVDSLPPAQWFPGMFKVAGLCETVYPPIFGILLPGWSLIGFAVILIAVVASLWRHRRKLVG.

Residues 1–14 (MNDYTLAIRRERRL) lie on the Cytoplasmic side of the membrane. Residues 15 to 31 (LMLLGWVCIALLAGALY) form a helical membrane-spanning segment. The Periplasmic portion of the chain corresponds to 32 to 49 (LQYVKNEDPCPLCIIQRY). Cys41 and Cys44 are disulfide-bonded. A helical membrane pass occupies residues 50–64 (FFCAIGIFAFLAAGI). Residues 65 to 71 (RNWRGVW) are Cytoplasmic-facing. Residues 72-89 (VLELLIAIAAAGGVGTAA) form a helical membrane-spanning segment. The Periplasmic segment spans residues 90-144 (RHLTIQMNPGFSCGFDTLQPIVDSLPPAQWFPGMFKVAGLCETVYPPIFGILLPG). Cys102 and Cys130 form a disulfide bridge. A helical membrane pass occupies residues 145–163 (WSLIGFAVILIAVVASLWR). Over 164 to 170 (HRRKLVG) the chain is Cytoplasmic.

The protein belongs to the DsbB family.

It localises to the cell inner membrane. Its function is as follows. Required for disulfide bond formation in some periplasmic proteins. Acts by oxidizing the DsbA protein. The protein is Disulfide bond formation protein B 1 of Burkholderia lata (strain ATCC 17760 / DSM 23089 / LMG 22485 / NCIMB 9086 / R18194 / 383).